Here is a 134-residue protein sequence, read N- to C-terminus: Arsenate reductase (134 aa).

Active-site nucleophile residues include Cys11, Cys83, and Cys90. Disulfide bonds link Cys11–Cys83 and Cys83–Cys90.

It belongs to the low molecular weight phosphotyrosine protein phosphatase family. Thioredoxin-coupled ArsC subfamily.

The protein resides in the cytoplasm. It carries out the reaction arsenate + [thioredoxin]-dithiol + H(+) = arsenite + [thioredoxin]-disulfide + H2O. In terms of biological role, catalyzes the reduction of arsenate [As(V)] to arsenite [As(III)]. This Bacillus anthracis (strain A0248) protein is Arsenate reductase.